Reading from the N-terminus, the 188-residue chain is uncharacterized protein (188 aa).

A helical transmembrane segment spans residues 121 to 139; that stretch reads IWLYGGASLITTFINLGLV.

This sequence to B.subtilis YwjB.

It localises to the membrane. This is an uncharacterized protein from Bacillus subtilis (strain 168).